Here is a 435-residue protein sequence, read N- to C-terminus: Glutamyl-tRNA reductase (435 aa).

Residues 49 to 52, Ser118, 123 to 125, and Gln129 each bind substrate; these read TCNR and EPQ. Cys50 (nucleophile) is an active-site residue. NADP(+) is bound at residue 203-208; the sequence is GAGETI.

The protein belongs to the glutamyl-tRNA reductase family. As to quaternary structure, homodimer.

It catalyses the reaction (S)-4-amino-5-oxopentanoate + tRNA(Glu) + NADP(+) = L-glutamyl-tRNA(Glu) + NADPH + H(+). Its pathway is porphyrin-containing compound metabolism; protoporphyrin-IX biosynthesis; 5-aminolevulinate from L-glutamyl-tRNA(Glu): step 1/2. Functionally, catalyzes the NADPH-dependent reduction of glutamyl-tRNA(Glu) to glutamate 1-semialdehyde (GSA). The polypeptide is Glutamyl-tRNA reductase (Glaesserella parasuis serovar 5 (strain SH0165) (Haemophilus parasuis)).